The sequence spans 386 residues: Protein phosphatase methylesterase 1 (386 aa).

The disordered stretch occupies residues 1-38 (MSALEKSMHLGRLPSRPPLPGSGGSQSGAKMRMGPGRK). Serine 15 bears the Phosphoserine mark. Arginine 16 carries the asymmetric dimethylarginine; alternate modification. Arginine 16 is modified (omega-N-methylarginine; alternate). Residues serine 156 and aspartate 181 contribute to the active site. Over residues 255–265 (IEEEEEDEEGS) the composition is skewed to acidic residues. Positions 255 to 280 (IEEEEEDEEGSESVNKRKKEDDMETK) are disordered. The segment covering 268 to 280 (VNKRKKEDDMETK) has biased composition (basic and acidic residues). Residue histidine 349 is part of the active site.

This sequence belongs to the AB hydrolase superfamily. Binds PPP2CA and PPP2CB. Post-translationally, phosphorylated by SIK1 following increases in intracellular sodium, leading to dissociation from the protein phosphatase 2A (PP2A) complex and subsequent dephosphorylation of sodium/potassium-transporting ATPase ATP1A1. Ubiquitous. Highly expressed in testis and brain.

The enzyme catalyses [phosphatase 2A protein]-C-terminal L-leucine methyl ester + H2O = [phosphatase 2A protein]-C-terminal L-leucine + methanol + H(+). Functionally, demethylates proteins that have been reversibly carboxymethylated. Demethylates PPP2CB (in vitro) and PPP2CA. Binding to PPP2CA displaces the manganese ion and inactivates the enzyme. This is Protein phosphatase methylesterase 1 (Ppme1) from Mus musculus (Mouse).